Here is a 1376-residue protein sequence, read N- to C-terminus: Phospholipid-transporting ATPase DRS2 (1376 aa).

Residues 1 to 10 (MAGRPTGGPQ) show a composition bias toward gly residues. Disordered stretches follow at residues 1-151 (MAGR…AAAR) and 180-217 (GYSE…PKRD). Residues 1–306 (MAGRPTGGPQ…QIPGLSPTNR (306 aa)) are Cytoplasmic-facing. Residues 40 to 50 (DLMRTYTRDQE) are compositionally biased toward basic and acidic residues. Residues 85 to 96 (QSSSSNNNNNNN) show a composition bias toward low complexity. The segment covering 97–115 (VSAPYSRSGRQYSQTSDLG) has biased composition (polar residues). Residues 191–203 (PGGGGGGAGGGGH) are compositionally biased toward gly residues. Residues 307–327 (FTTIIPLVAVLMVSAGKELVE) form a helical membrane-spanning segment. At 328-509 (DYRRKQADAA…KVEKKLNTLV (182 aa)) the chain is on the extracellular side. Residues Asn-339, Asn-433, and Asn-490 are each glycosylated (N-linked (GlcNAc...) asparagine). A helical membrane pass occupies residues 510 to 530 (LLLVGILMVLSIISTVGDLII). Residues 531-559 (RRVEGDAISYLMLDQPDTAGKIAETFFKD) lie on the Cytoplasmic side of the membrane. The chain crosses the membrane as a helical span at residues 560–580 (MVTYWVLFSSLVPISLFVTVE). The Extracellular segment spans residues 581-1107 (MVKYWHGILI…VFSGAVIYES (527 aa)). Residue Asp-625 is the 4-aspartylphosphate intermediate of the active site. Asp-625, Lys-626, and Thr-627 together coordinate ATP. Asp-625 is a Mg(2+) binding site. Residue Thr-627 participates in Mg(2+) binding. N-linked (GlcNAc...) asparagine glycosylation is present at Asn-679. Glu-720 and Phe-761 together coordinate ATP. Asn-762 carries an N-linked (GlcNAc...) asparagine glycan. ATP-binding residues include Ser-763, Lys-766, Lys-784, Arg-817, Thr-818, Thr-898, Gly-899, Asp-900, Arg-991, and Lys-997. Asp-1018 lines the Mg(2+) pocket. The ATP site is built by Asn-1021 and Asp-1022. Mg(2+) is bound at residue Asp-1022. Asn-1083 is a glycosylation site (N-linked (GlcNAc...) asparagine). A helical transmembrane segment spans residues 1108-1128 (WTLTFYNVFYTVLPPLALGIL). The Cytoplasmic segment spans residues 1129-1165 (DQFISARLLDRYPQLYSMGQQNQFFRMKVFIEWLLNA). A helical membrane pass occupies residues 1166–1186 (VYHSIILYVFGELIWHGDLIL). Over 1187 to 1190 (ENGQ) the chain is Extracellular. Residues 1191–1211 (IAGHWMWGTALYAPVLLTVLG) traverse the membrane as a helical segment. Position 1212 (Lys-1212) interacts with a 1,2-diacyl-sn-glycero-3-phospho-(1D-myo-inositol 4-phosphate). Residues 1212–1224 (KAGLVTSNWTKYH) lie on the Cytoplasmic side of the membrane. Residues 1225–1245 (VIAIPGSMAIWWIFIAVYGTV) form a helical membrane-spanning segment. The Extracellular portion of the chain corresponds to 1246 to 1257 (APMIPFSPEFHG). The chain crosses the membrane as a helical span at residues 1258–1278 (IVPKLYSSPIFWLQSFALAIL). The Cytoplasmic portion of the chain corresponds to 1279 to 1376 (CLLRDFAWKY…TSSRPQGQGT (98 aa)). The a 1,2-diacyl-sn-glycero-3-phospho-(1D-myo-inositol 4-phosphate) site is built by Arg-1282, Trp-1286, Lys-1287, Tyr-1298, and His-1299.

This sequence belongs to the cation transport ATPase (P-type) (TC 3.A.3) family. Type IV subfamily. Mg(2+) is required as a cofactor.

The protein localises to the cell membrane. It localises to the golgi apparatus. Its subcellular location is the trans-Golgi network membrane. It catalyses the reaction ATP + H2O + phospholipidSide 1 = ADP + phosphate + phospholipidSide 2.. The catalysed reaction is a 1,2-diacyl-sn-glycero-3-phospho-L-serine(out) + ATP + H2O = a 1,2-diacyl-sn-glycero-3-phospho-L-serine(in) + ADP + phosphate + H(+). The enzyme catalyses a 1,2-diacyl-sn-glycero-3-phosphoethanolamine(out) + ATP + H2O = a 1,2-diacyl-sn-glycero-3-phosphoethanolamine(in) + ADP + phosphate + H(+). In terms of biological role, catalytic component of a P4-ATPase flippase complex which catalyzes the hydrolysis of ATP coupled to the transport of phosphatidylserine and small amounts of ethanolamine from the lumen to the cytosolic leaflet of the trans-Golgi network and cell membrane and ensures the maintenance of asymmetric distribution of phospholipids. Required for efficient vesicle transport during toxin secretion. In Verticillium dahliae (strain VdLs.17 / ATCC MYA-4575 / FGSC 10137) (Verticillium wilt), this protein is Phospholipid-transporting ATPase DRS2 (DRS2).